Consider the following 52-residue polypeptide: Rubredoxin (52 aa).

The Rubredoxin-like domain occupies 1–51 (MDKYECSICGYIYDEAEGDDGNVAAGTKFADLPADWVCPTCGADKDAFVKM). Positions 6, 9, 38, and 41 each coordinate Fe cation.

It belongs to the rubredoxin family. Fe(3+) serves as cofactor.

Rubredoxin is a small nonheme, iron protein lacking acid-labile sulfide. Its single Fe, chelated to 4 Cys, functions as an electron acceptor and may also stabilize the conformation of the molecule. This Megasphaera elsdenii protein is Rubredoxin.